The sequence spans 91 residues: Cell division topological specificity factor (91 aa).

It belongs to the MinE family.

In terms of biological role, prevents the cell division inhibition by proteins MinC and MinD at internal division sites while permitting inhibition at polar sites. This ensures cell division at the proper site by restricting the formation of a division septum at the midpoint of the long axis of the cell. The chain is Cell division topological specificity factor from Wigglesworthia glossinidia brevipalpis.